Consider the following 66-residue polypeptide: uncharacterized protein (66 aa).

Residues 1–20 (MIALAYLATVAIAAMVLAVA) form a hydrophobic region.

This is an uncharacterized protein from Streptomyces lividans.